Reading from the N-terminus, the 215-residue chain is Protein C' (215 aa).

Residues 12–34 are disordered; that stretch reads MPSFLKKILKLRGRRQEDESRSR. Positions 15–22 are involved in self-degradation and in host STAT1 degradation; sequence FLKKILKL.

The protein belongs to the respirovirus protein C family. As to quaternary structure, the different isoforms interact (via C-terminus) with unphosphorylated and phosphorylated human STAT1 (via N-terminus), favoring the formation of parallel STAT1 homodimers. The different isoforms do not interact with host STAT2. C protein interacts with L protein; this interaction has an inhibitory effect on viral transcription and replication. Y1 and Y2 proteins are produced not only by alternative initiation, but also by proteolytic cleavage of C'. Only alternative initiation is detected in vitro, whereas in vivo cleavage seems to be predominant.

The protein resides in the host cytoplasm. Its function is as follows. The different products prevent the establishment of cellular antiviral state by blocking the interferon-alpha/beta (IFN-alpha/beta) and IFN-gamma signaling pathways. They inhibit IFN-alpha/beta induced tyrosine phosphorylation of STAT1 and STAT2. Blocking the IFN-alpha/beta pathway requires binding to STAT1 in the cytoplasm. They inhibit IFN-gamma induced serine phosphorylation of STAT1. Block the IFN-gamma pathway by binding to and stabilizing the parallel form of the STAT1 dimer, further inducing high-molecular-weight complex formation and inhibition of transcription by IFN-gamma. May also have a role in preventing the cell to enter apoptosis. Modulate regulation of viral transcription and replication. Overexpression inhibits the viral RNA polymerase. The absence of all C', C, Y1 and Y2 proteins leads to viral delayed growth. Plays an important role in virion particles release. Modulates virion shape. In Sendai virus (strain Nagoya) (SeV), this protein is Protein C' (P/V/C).